A 382-amino-acid chain; its full sequence is D-galactonate dehydratase (382 aa).

Asp183 contributes to the Mg(2+) binding site. His185 acts as the Proton donor in catalysis. Mg(2+) contacts are provided by Glu209 and Glu235. The active-site Proton acceptor is the His285.

The protein belongs to the mandelate racemase/muconate lactonizing enzyme family. GalD subfamily. It depends on Mg(2+) as a cofactor.

It carries out the reaction D-galactonate = 2-dehydro-3-deoxy-D-galactonate + H2O. Its pathway is carbohydrate acid metabolism; D-galactonate degradation; D-glyceraldehyde 3-phosphate and pyruvate from D-galactonate: step 1/3. Its function is as follows. Catalyzes the dehydration of D-galactonate to 2-keto-3-deoxy-D-galactonate. This Escherichia coli O9:H4 (strain HS) protein is D-galactonate dehydratase.